Reading from the N-terminus, the 199-residue chain is dTTP/UTP pyrophosphatase (199 aa).

Asp78 serves as the catalytic Proton acceptor.

It belongs to the Maf family. YhdE subfamily. A divalent metal cation is required as a cofactor.

The protein resides in the cytoplasm. It carries out the reaction dTTP + H2O = dTMP + diphosphate + H(+). The enzyme catalyses UTP + H2O = UMP + diphosphate + H(+). Nucleoside triphosphate pyrophosphatase that hydrolyzes dTTP and UTP. May have a dual role in cell division arrest and in preventing the incorporation of modified nucleotides into cellular nucleic acids. The sequence is that of dTTP/UTP pyrophosphatase from Clostridium acetobutylicum (strain ATCC 824 / DSM 792 / JCM 1419 / IAM 19013 / LMG 5710 / NBRC 13948 / NRRL B-527 / VKM B-1787 / 2291 / W).